The following is a 242-amino-acid chain: Probable transcriptional regulatory protein NMB1648 (242 aa).

The protein belongs to the TACO1 family.

It localises to the cytoplasm. The sequence is that of Probable transcriptional regulatory protein NMB1648 from Neisseria meningitidis serogroup B (strain ATCC BAA-335 / MC58).